The following is a 345-amino-acid chain: Beta-hexosaminidase (345 aa).

Substrate-binding positions include Asp60, Arg68, Arg132, and 162-163 (KH). His175 acts as the Proton donor/acceptor in catalysis. Residue Asp247 is the Nucleophile of the active site.

This sequence belongs to the glycosyl hydrolase 3 family. NagZ subfamily.

The protein localises to the cytoplasm. It carries out the reaction Hydrolysis of terminal non-reducing N-acetyl-D-hexosamine residues in N-acetyl-beta-D-hexosaminides.. Its pathway is cell wall biogenesis; peptidoglycan recycling. In terms of biological role, plays a role in peptidoglycan recycling by cleaving the terminal beta-1,4-linked N-acetylglucosamine (GlcNAc) from peptide-linked peptidoglycan fragments, giving rise to free GlcNAc, anhydro-N-acetylmuramic acid and anhydro-N-acetylmuramic acid-linked peptides. This chain is Beta-hexosaminidase, found in Actinobacillus pleuropneumoniae serotype 3 (strain JL03).